A 501-amino-acid polypeptide reads, in one-letter code: Pentatricopeptide repeat-containing protein At2g36730 (501 aa).

9 PPR repeats span residues 77 to 111 (TPST…GIKP), 112 to 146 (NKLT…GFDF), 147 to 177 (DVYV…MTER), 178 to 212 (NVVS…RFCP), 213 to 243 (DETT…VREL), 246 to 276 (NCRL…MVDK), 277 to 312 (NVWT…SVRP), 313 to 343 (NYVT…MEKI), and 349 to 379 (MMIH…MPFE). Positions 384 to 462 (VWRTLLSACS…IAGESCLELG (79 aa)) are type E motif. The type E(+) motif stretch occupies residues 463-493 (GSFHRFFSGYDPRSEYVSIYELLDLFKFQLT).

The protein belongs to the PPR family. PCMP-E subfamily.

This is Pentatricopeptide repeat-containing protein At2g36730 (PCMP-E44) from Arabidopsis thaliana (Mouse-ear cress).